The sequence spans 192 residues: uncharacterized protein (192 aa).

To R.meliloti RA0936 and y4nF.

This is an uncharacterized protein from Sinorhizobium fredii (strain NBRC 101917 / NGR234).